We begin with the raw amino-acid sequence, 93 residues long: Pyrimidine/purine nucleoside phosphorylase (93 aa).

The protein belongs to the nucleoside phosphorylase PpnP family.

It catalyses the reaction a purine D-ribonucleoside + phosphate = a purine nucleobase + alpha-D-ribose 1-phosphate. The enzyme catalyses adenosine + phosphate = alpha-D-ribose 1-phosphate + adenine. It carries out the reaction cytidine + phosphate = cytosine + alpha-D-ribose 1-phosphate. The catalysed reaction is guanosine + phosphate = alpha-D-ribose 1-phosphate + guanine. It catalyses the reaction inosine + phosphate = alpha-D-ribose 1-phosphate + hypoxanthine. The enzyme catalyses thymidine + phosphate = 2-deoxy-alpha-D-ribose 1-phosphate + thymine. It carries out the reaction uridine + phosphate = alpha-D-ribose 1-phosphate + uracil. The catalysed reaction is xanthosine + phosphate = alpha-D-ribose 1-phosphate + xanthine. Its function is as follows. Catalyzes the phosphorolysis of diverse nucleosides, yielding D-ribose 1-phosphate and the respective free bases. Can use uridine, adenosine, guanosine, cytidine, thymidine, inosine and xanthosine as substrates. Also catalyzes the reverse reactions. This chain is Pyrimidine/purine nucleoside phosphorylase, found in Pseudomonas savastanoi pv. phaseolicola (strain 1448A / Race 6) (Pseudomonas syringae pv. phaseolicola (strain 1448A / Race 6)).